The chain runs to 794 residues: Protein smoothened (794 aa).

Positions 1–15 are cleaved as a signal peptide; it reads GPCWLWALALGLALG. Residues 16–201 are Extracellular-facing; that stretch reads PRRCPAAPLN…FTETEHREMH (186 aa). N25 carries an N-linked (GlcNAc...) asparagine glycan. 5 disulfides stabilise this stretch: C34-C148, C40-C104, C48-C97, C88-C124, and C117-C139. In terms of domain architecture, FZ spans 35–151; it reads RRPAACERLR…DRFPEGCPNE (117 aa). D65 provides a ligand contact to cholesterol. A glycan (N-linked (GlcNAc...) asparagine) is linked at N158. Cystine bridges form between C163–C183 and C187–C264. The helical transmembrane segment at 202–222 threads the bilayer; that stretch reads VYIAFSSVTISCTFFTLATFV. The Cytoplasmic segment spans residues 223-231; sequence ADWRNSNRY. A helical transmembrane segment spans residues 232-252; that stretch reads PAVILFYVNACFFVGSIGCVA. Topologically, residues 253 to 283 are extracellular; the sequence is QFMDGARDEIVCRADGTMRLGEPTSNETLSC. N-linked (GlcNAc...) asparagine glycosylation is present at N278. A disulfide bridge links C283 with C359. The chain crosses the membrane as a helical span at residues 284 to 304; it reads VIIFVIVYYSLMSGVIWFVML. Residues 305–327 are Cytoplasmic-facing; sequence TYAWHTSFKALGTTYQPLLGKTS. Residues 328 to 348 traverse the membrane as a helical segment; it reads YFHLITWSIPFVLTVAILAVA. Residues 349-371 lie on the Extracellular side of the membrane; it reads QVDGDSVSGICFVGYKNYRYRAG. Y363 is a binding site for cholesterol. Residues 372–392 traverse the membrane as a helical segment; sequence FVLAPIGLVLIVGGYFLIRGV. At 393–420 the chain is on the cytoplasmic side; sequence MTLFSIKSNHPGLLSEKAASKINETMLR. A helical membrane pass occupies residues 421–440; it reads LGIFGFLAFGFVFITFGCHF. Residues 441–493 are Extracellular-facing; the sequence is YDFFNQAEWERSFREYVLCEANVTIATQTNKPIPECEIKNRPSLLVEKINLFA. A disulfide bridge links C459 with C476. Residue N462 is glycosylated (N-linked (GlcNAc...) asparagine). The helical transmembrane segment at 494-514 threads the bilayer; it reads MFGTGISMSTWVWTKATLLIW. Residues 515–794 lie on the Cytoplasmic side of the membrane; the sequence is KRTWCRLTGQ…AELLDADLDF (280 aa). 2 disordered regions span residues 634–655 and 723–773; these read LQKR…CPER and PFCP…RAGL. A compositionally biased stretch (basic residues) spans 637–647; sequence RSRKKKRRKKK.

The protein belongs to the G-protein coupled receptor Fz/Smo family. As to quaternary structure, homodimer.

The protein resides in the cell membrane. The protein localises to the cell projection. Its subcellular location is the cilium. Functionally, g protein-coupled receptor which associates with the patched protein (PTCH) to transduce hedgehog protein signaling. Binding of sonic hedgehog (SHH) to its receptor patched prevents inhibition of smoothened (SMO) by patched. When active, SMO binds to and sequesters protein kinase A catalytic subunit PRKACA at the cell membrane, preventing PRKACA-mediated phosphorylation of GLI transcription factors which releases the GLI proteins from PRKACA-mediated inhibition and allows for transcriptional activation of hedgehog pathway target genes. This is Protein smoothened (SMO) from Gallus gallus (Chicken).